The sequence spans 368 residues: Peptide chain release factor 2 (368 aa).

Gln-250 carries the post-translational modification N5-methylglutamine.

Belongs to the prokaryotic/mitochondrial release factor family. In terms of processing, methylated by PrmC. Methylation increases the termination efficiency of RF2.

It is found in the cytoplasm. In terms of biological role, peptide chain release factor 2 directs the termination of translation in response to the peptide chain termination codons UGA and UAA. In Rickettsia conorii (strain ATCC VR-613 / Malish 7), this protein is Peptide chain release factor 2.